We begin with the raw amino-acid sequence, 590 residues long: Ankyrin repeat-containing protein ITN1 (590 aa).

Residues 25 to 44 (ENQNPMIDPSPTPSPSATAT) are disordered. 7 ANK repeats span residues 73-102 (HNDTELHLAAQRGDLAAVQQILKDINSQME), 128-157 (LGETALFTAADKGHLDVVKELLKYSSRESI), 163-192 (SGYDPLHIAAIQGHHAIVEVLLDHDATLSQ), 197-226 (SNATPLVSAAMRGHTEVVNQLLSKAGNLLE), 231-260 (NNKNALHLAARQGHVEVIKALLSKDPQLAR), 265-294 (KGQTALHMAVKGQSSEVVKLLLDADPAIVM), and 299-329 (SCNTALHVATRKKRAEIVELLLSLPDTNANT). Helical transmembrane passes span 422–442 (VTVVAVLFATVAFAAIFTVPG), 460–480 (IFFIFNALALFTSLAVVVVQI), 500–520 (LMWLASMCTSVAFLASSYIVV), and 531–551 (VTVVGGVIMAGVLGTMTYYVV).

In terms of assembly, interacts with REM19/RTV1. In terms of tissue distribution, expressed in roots, shoots, leaf vasculature and stems.

It is found in the cell membrane. Involved in salt stress tolerance. May act through abscisic acid (ABA) signaling pathways and promote reactive oxygen species (ROS) production. In Arabidopsis thaliana (Mouse-ear cress), this protein is Ankyrin repeat-containing protein ITN1.